The primary structure comprises 51 residues: GFEVIAQAKLGGQTYTVALGREMVALAGAHTVGFARMGNLPPSAGAQLEIR.

Heme is bound at residue H30. Residue T31 coordinates Ca(2+).

This sequence belongs to the peroxidase family. Classical plant (class III) peroxidase subfamily. It depends on heme b as a cofactor. Ca(2+) is required as a cofactor.

Its subcellular location is the secreted. The enzyme catalyses 2 a phenolic donor + H2O2 = 2 a phenolic radical donor + 2 H2O. In terms of biological role, removal of H(2)O(2), oxidation of toxic reductants, biosynthesis and degradation of lignin, suberization, auxin catabolism, response to environmental stresses such as wounding, pathogen attack and oxidative stress. These functions might be dependent on each isozyme/isoform in each plant tissue. Functionally, suggested to catalyze the deposition of the aromatic residues of suberin on the cell wall and thus play a role in cell-suberization. In Capsicum annuum (Capsicum pepper), this protein is Suberization-associated anionic peroxidase 1.